Consider the following 364-residue polypeptide: CLIP domain-containing serine protease B15 (364 aa).

The N-terminal stretch at 1-19 (MRWLVCLIVSWCSLVPLGA) is a signal peptide. The 60-residue stretch at 30 to 89 (PCQTPSGTAGTCEPVKNCSYVRKILKSPDFSHYDTTYLDTLKCGDLMVPMRKKPIPLLCC) folds into the Clip domain. Disulfide bonds link cysteine 31/cysteine 88, cysteine 41/cysteine 72, and cysteine 47/cysteine 89. Residue asparagine 46 is glycosylated (N-linked (GlcNAc...) asparagine). The Peptidase S1 domain occupies 107-359 (IYFGEETERG…YLDWMETVMF (253 aa)). N-linked (GlcNAc...) asparagine glycosylation occurs at asparagine 131. An intrachain disulfide couples cysteine 137 to cysteine 153. Residue histidine 152 is the Charge relay system of the active site. Asparagine 171, asparagine 177, and asparagine 206 each carry an N-linked (GlcNAc...) asparagine glycan. Aspartate 212 (charge relay system) is an active-site residue. Cysteine 279 and cysteine 296 are joined by a disulfide. N-linked (GlcNAc...) asparagine glycosylation is found at asparagine 287 and asparagine 301. Cysteine 306 and cysteine 335 form a disulfide bridge. Residue serine 310 is the Charge relay system of the active site.

It belongs to the peptidase S1 family. CLIP subfamily. In terms of processing, N-glycosylated. Proteolytically cleaved. Expressed by a subpopulation of hemocytes.

The protein localises to the secreted. In terms of biological role, serine protease. Plays a role in innate immunity against infections by parasite P.berghei and by Gram-negative bacteria such as E.coli. In response to P.berghei infection, contributes to the clearing of parasite ookinetes independent of melanization, an innate immune response which consists in the deposition of melanin pigments on invading pathogens and parasites. The polypeptide is CLIP domain-containing serine protease B15 (Anopheles gambiae (African malaria mosquito)).